Consider the following 196-residue polypeptide: MADILTQLQTCLDQLATQFYATLCYLTTYHDNIPATPPPTSTTPSAAPLLAKIPKNASTPPVPASAPQAAQSQSQASPPPPDTANPQTGGQHADQQQQSPDGEGLPAPDSPATFAARQRELARDLVIKEQQIEYLISVLPGIDSSEAEQERRIRELEGELRIVEGVREERRRELGVLRRRLEGVLGVVERGIYSRD.

Positions 52 to 111 (KIPKNASTPPVPASAPQAAQSQSQASPPPPDTANPQTGGQHADQQQQSPDGEGLPAPDSP) are disordered. Low complexity-rich tracts occupy residues 65-76 (SAPQAAQSQSQA) and 87-98 (QTGGQHADQQQQ). Residues 144 to 174 (SSEAEQERRIRELEGELRIVEGVREERRREL) are a coiled coil.

This sequence belongs to the Mediator complex subunit 21 family. In terms of assembly, component of the Mediator complex.

The protein localises to the nucleus. In terms of biological role, component of the Mediator complex, a coactivator involved in the regulated transcription of nearly all RNA polymerase II-dependent genes. Mediator functions as a bridge to convey information from gene-specific regulatory proteins to the basal RNA polymerase II transcription machinery. Mediator is recruited to promoters by direct interactions with regulatory proteins and serves as a scaffold for the assembly of a functional preinitiation complex with RNA polymerase II and the general transcription factors. The chain is Mediator of RNA polymerase II transcription subunit 21 (srb7) from Aspergillus niger (strain ATCC MYA-4892 / CBS 513.88 / FGSC A1513).